Consider the following 487-residue polypeptide: Betaine aldehyde dehydrogenase (487 aa).

K(+)-binding residues include Ser-26 and Asp-93. 150–152 lines the NAD(+) pocket; the sequence is GAW. The active-site Charge relay system is the Lys-162. Residues 176–179 and 229–232 contribute to the NAD(+) site; these read KPSE and SVPT. K(+) is bound at residue Leu-244. Glu-250 functions as the Proton acceptor in the catalytic mechanism. The NAD(+) site is built by Gly-252, Cys-284, and Glu-384. Cys-284 acts as the Nucleophile in catalysis. A Cysteine sulfenic acid (-SOH) modification is found at Cys-284. Residues Lys-454 and Gly-457 each coordinate K(+). Glu-461 functions as the Charge relay system in the catalytic mechanism.

This sequence belongs to the aldehyde dehydrogenase family. Dimer of dimers. The cofactor is K(+).

The catalysed reaction is betaine aldehyde + NAD(+) + H2O = glycine betaine + NADH + 2 H(+). It participates in amine and polyamine biosynthesis; betaine biosynthesis via choline pathway; betaine from betaine aldehyde: step 1/1. Functionally, involved in the biosynthesis of the osmoprotectant glycine betaine. Catalyzes the irreversible oxidation of betaine aldehyde to the corresponding acid. The protein is Betaine aldehyde dehydrogenase of Rhizobium etli (strain ATCC 51251 / DSM 11541 / JCM 21823 / NBRC 15573 / CFN 42).